The following is a 483-amino-acid chain: 1-aminocyclopropane-1-carboxylate synthase 2 (483 aa).

N6-(pyridoxal phosphate)lysine is present on Lys-275.

It belongs to the class-I pyridoxal-phosphate-dependent aminotransferase family. Pyridoxal 5'-phosphate is required as a cofactor.

The enzyme catalyses S-adenosyl-L-methionine = 1-aminocyclopropane-1-carboxylate + S-methyl-5'-thioadenosine + H(+). It functions in the pathway alkene biosynthesis; ethylene biosynthesis via S-adenosyl-L-methionine; ethylene from S-adenosyl-L-methionine: step 1/2. In terms of biological role, catalyzes the formation of 1-aminocyclopropane-1-carboxylate, a direct precursor of ethylene in higher plants. Involved in defense response by producing ethylene after pathogen infection. Involved in several phosphate deficiency-induced adaptive responses, such as lateral root elongation. This chain is 1-aminocyclopropane-1-carboxylate synthase 2, found in Oryza sativa subsp. japonica (Rice).